The primary structure comprises 364 residues: D-alanine--D-alanine ligase (364 aa).

The ATP-grasp domain maps to 134-344 (KVLLKSFNIP…YESLVDKLIT (211 aa)). Position 167–222 (167–222 (NNKLNYPVIVKPSVLGSSIGINVAYNVSQIEKYIEEAFEYDLTVVVEKFIKAREIE)) interacts with ATP. Residues D297, E311, and N313 each coordinate Mg(2+).

It belongs to the D-alanine--D-alanine ligase family. Mg(2+) serves as cofactor. Mn(2+) is required as a cofactor.

Its subcellular location is the cytoplasm. It catalyses the reaction 2 D-alanine + ATP = D-alanyl-D-alanine + ADP + phosphate + H(+). It functions in the pathway cell wall biogenesis; peptidoglycan biosynthesis. Its function is as follows. Cell wall formation. This Borrelia duttonii (strain Ly) protein is D-alanine--D-alanine ligase.